We begin with the raw amino-acid sequence, 311 residues long: Formimidoylglutamase (311 aa).

Residues H130, D155, H157, D159, C242, and D244 each contribute to the Mn(2+) site.

It belongs to the arginase family. Mn(2+) is required as a cofactor.

The catalysed reaction is N-formimidoyl-L-glutamate + H2O = formamide + L-glutamate. It participates in amino-acid degradation; L-histidine degradation into L-glutamate; L-glutamate from N-formimidoyl-L-glutamate (hydrolase route): step 1/1. In terms of biological role, catalyzes the conversion of N-formimidoyl-L-glutamate to L-glutamate and formamide. This Staphylococcus epidermidis (strain ATCC 35984 / DSM 28319 / BCRC 17069 / CCUG 31568 / BM 3577 / RP62A) protein is Formimidoylglutamase.